The chain runs to 401 residues: CLIP domain-containing serine protease B9 (401 aa).

An N-terminal signal peptide occupies residues 1 to 26; that stretch reads MTSYNRSVAWLTVCVLLALHIGGSHQ. In terms of domain architecture, Clip spans 30-85; the sequence is QCTTPTRLRGRCISIYECDSILDYFKQRILTWEEREFLRKSQCTGATSGRQPFVCC. 3 cysteine pairs are disulfide-bonded: Cys-31–Cys-84, Cys-41–Cys-72, and Cys-47–Cys-85. The N-linked (GlcNAc...) asparagine glycan is linked to Asn-88. Residues 148–400 form the Peptidase S1 domain; sequence IYGGQNADID…YMAWVRSNIK (253 aa). Cys-178 and Cys-194 are disulfide-bonded. Catalysis depends on charge relay system residues His-193 and Asp-257. 2 cysteine pairs are disulfide-bonded: Cys-322/Cys-339 and Cys-349/Cys-376. Asn-330 carries N-linked (GlcNAc...) asparagine glycosylation. Ser-353 serves as the catalytic Charge relay system.

The protein belongs to the peptidase S1 family. CLIP subfamily. As to quaternary structure, forms a covalent heterodimer with SRPN2; the interaction inhibits CLIPB9 protease activity. In terms of processing, proteolytic cleavage is necessary for activation.

It localises to the secreted. Inhibited by serpin SRPN2. Functionally, serine protease that functions in the melanization-mediated immune response. Cleaves and activates prophenoloxidase (PPO), which is required for the activation of the prophenoloxidase cascade probably following the recognition of pathogen-derived products. The chain is CLIP domain-containing serine protease B9 from Anopheles gambiae (African malaria mosquito).